Reading from the N-terminus, the 828-residue chain is Periplasmic nitrate reductase (828 aa).

Positions Met-1–Ala-32 form a signal peptide, tat-type signal. The 57-residue stretch at Ile-37–Asp-93 folds into the 4Fe-4S Mo/W bis-MGD-type domain. The [4Fe-4S] cluster site is built by Cys-44, Cys-47, Cys-51, and Cys-79. Residues Lys-81, Gln-148, Asn-173, Cys-177, Trp-210–Met-217, Ser-241–His-245, Met-371, Gln-375, Asn-481, Ser-507–Asp-508, Lys-530, Asp-557, and Thr-717–Thr-726 each bind Mo-bis(molybdopterin guanine dinucleotide). Phe-793 is a binding site for substrate. Asn-801 and Lys-818 together coordinate Mo-bis(molybdopterin guanine dinucleotide).

This sequence belongs to the prokaryotic molybdopterin-containing oxidoreductase family. NasA/NapA/NarB subfamily. As to quaternary structure, component of the periplasmic nitrate reductase NapAB complex composed of NapA and NapB. Requires [4Fe-4S] cluster as cofactor. The cofactor is Mo-bis(molybdopterin guanine dinucleotide). In terms of processing, predicted to be exported by the Tat system. The position of the signal peptide cleavage has not been experimentally proven.

It is found in the periplasm. It catalyses the reaction 2 Fe(II)-[cytochrome] + nitrate + 2 H(+) = 2 Fe(III)-[cytochrome] + nitrite + H2O. Its function is as follows. Catalytic subunit of the periplasmic nitrate reductase complex NapAB. Receives electrons from NapB and catalyzes the reduction of nitrate to nitrite. The polypeptide is Periplasmic nitrate reductase (Aggregatibacter actinomycetemcomitans (Actinobacillus actinomycetemcomitans)).